We begin with the raw amino-acid sequence, 281 residues long: MTSKEDGKAAPGEERRRSPLDHLPPPANSNKPLTPFSIEDILNKPSVRRSYSLCGAAHLLAAADKHAQGGLPLAGRALLSQTSPLCALEELASKTFKGLEVSVLQAAEGRDGMTIFGQRQTPKKRRKSRTAFTNHQIYELEKRFLYQKYLSPADRDQIAQQLGLTNAQVITWFQNRRAKLKRDLEEMKADVESAKKLGPSGQMDIVALAELEQNSEATAGGGGGCGRAKSRPGSPVLPPGAPKAPGAGALQLSPASPLTDQPASSQDCSEDEEDEEIDVDD.

Positions 1-20 are enriched in basic and acidic residues; it reads MTSKEDGKAAPGEERRRSPL. Positions 1 to 35 are disordered; that stretch reads MTSKEDGKAAPGEERRRSPLDHLPPPANSNKPLTP. The homeobox DNA-binding region spans 125-184; the sequence is RRKSRTAFTNHQIYELEKRFLYQKYLSPADRDQIAQQLGLTNAQVITWFQNRRAKLKRDL. The interval 214–281 is disordered; that stretch reads NSEATAGGGG…EEDEEIDVDD (68 aa). Residues 253–267 are compositionally biased toward polar residues; it reads SPASPLTDQPASSQD. Residues 268 to 281 show a composition bias toward acidic residues; sequence CSEDEEDEEIDVDD.

Interacts with SKOR1 which acts as a transcriptional corepressor.

Its subcellular location is the nucleus. Transcription factor required for the development of GABAergic interneurons in the dorsal horn of the spinal cord and migration and further development of hypaxial muscle precursor cells for limb muscles, diaphragm and hypoglossal cord. This Homo sapiens (Human) protein is Transcription factor LBX1 (LBX1).